The following is a 419-amino-acid chain: Imidazolonepropionase (419 aa).

Residues histidine 82 and histidine 84 each coordinate Fe(3+). 2 residues coordinate Zn(2+): histidine 82 and histidine 84. The 4-imidazolone-5-propanoate site is built by arginine 91, tyrosine 154, and histidine 187. Tyrosine 154 contributes to the N-formimidoyl-L-glutamate binding site. Histidine 252 provides a ligand contact to Fe(3+). Histidine 252 is a binding site for Zn(2+). Glutamate 255 provides a ligand contact to 4-imidazolone-5-propanoate. Aspartate 326 contributes to the Fe(3+) binding site. Residue aspartate 326 coordinates Zn(2+). Positions 328 and 330 each coordinate N-formimidoyl-L-glutamate. Serine 331 is a binding site for 4-imidazolone-5-propanoate.

The protein belongs to the metallo-dependent hydrolases superfamily. HutI family. Zn(2+) is required as a cofactor. The cofactor is Fe(3+).

It localises to the cytoplasm. It catalyses the reaction 4-imidazolone-5-propanoate + H2O = N-formimidoyl-L-glutamate. The protein operates within amino-acid degradation; L-histidine degradation into L-glutamate; N-formimidoyl-L-glutamate from L-histidine: step 3/3. Its function is as follows. Catalyzes the hydrolytic cleavage of the carbon-nitrogen bond in imidazolone-5-propanoate to yield N-formimidoyl-L-glutamate. It is the third step in the universal histidine degradation pathway. This Clostridium tetani (strain Massachusetts / E88) protein is Imidazolonepropionase.